We begin with the raw amino-acid sequence, 313 residues long: MNWENESSPKEFILLGFSDRAWLQMPLFVVLLISYTITIFGNVSIMMVCILDPKLHTPMYFFLTNLSILDLCYTTTTVPHMLVNIGCNKKTISYAGCVAHLIIFLALGATECLLLAVMSFDRYVAVCRPLHYVVIMNYWFCLRMAAFSWLIGFGNSVLQSSLTLNMPRCGHQEVDHFFCEVPALLKLSCADTKPIEAELFFFSVLILLIPVTLILISYGFIAQAVLKIRSAEGRQKAFGTCGSHMIVVSLFYGTAIYMYLQPPSSTSKDWGKMVSLFYGIITSMLNSLIYSLRNKDMKEAFKRLMPRIFFCKK.

The Extracellular segment spans residues 1-25 (MNWENESSPKEFILLGFSDRAWLQM). A glycan (N-linked (GlcNAc...) asparagine) is linked at Asn5. A helical membrane pass occupies residues 26–49 (PLFVVLLISYTITIFGNVSIMMVC). Over 50–57 (ILDPKLHT) the chain is Cytoplasmic. Residues 58 to 79 (PMYFFLTNLSILDLCYTTTTVP) form a helical membrane-spanning segment. Residues 80-100 (HMLVNIGCNKKTISYAGCVAH) lie on the Extracellular side of the membrane. Cys97 and Cys189 are joined by a disulfide. The chain crosses the membrane as a helical span at residues 101-120 (LIIFLALGATECLLLAVMSF). The Cytoplasmic segment spans residues 121–139 (DRYVAVCRPLHYVVIMNYW). The helical transmembrane segment at 140 to 158 (FCLRMAAFSWLIGFGNSVL) threads the bilayer. Topologically, residues 159 to 195 (QSSLTLNMPRCGHQEVDHFFCEVPALLKLSCADTKPI) are extracellular. Residues 196–219 (EAELFFFSVLILLIPVTLILISYG) form a helical membrane-spanning segment. The Cytoplasmic portion of the chain corresponds to 220–236 (FIAQAVLKIRSAEGRQK). A helical membrane pass occupies residues 237-259 (AFGTCGSHMIVVSLFYGTAIYMY). The Extracellular portion of the chain corresponds to 260–272 (LQPPSSTSKDWGK). Residues 273–292 (MVSLFYGIITSMLNSLIYSL) form a helical membrane-spanning segment. Residues 293-313 (RNKDMKEAFKRLMPRIFFCKK) are Cytoplasmic-facing.

This sequence belongs to the G-protein coupled receptor 1 family.

The protein resides in the cell membrane. Odorant receptor. The sequence is that of Putative olfactory receptor 2B3 (OR2B3) from Homo sapiens (Human).